The following is a 116-amino-acid chain: Aspartate 1-decarboxylase (116 aa).

Catalysis depends on Ser-25, which acts as the Schiff-base intermediate with substrate; via pyruvic acid. Ser-25 is modified (pyruvic acid (Ser)). Thr-57 is a substrate binding site. Tyr-58 (proton donor) is an active-site residue. 73–75 is a binding site for substrate; it reads GAA.

Belongs to the PanD family. Heterooctamer of four alpha and four beta subunits. Requires pyruvate as cofactor. Is synthesized initially as an inactive proenzyme, which is activated by self-cleavage at a specific serine bond to produce a beta-subunit with a hydroxyl group at its C-terminus and an alpha-subunit with a pyruvoyl group at its N-terminus.

The protein localises to the cytoplasm. It carries out the reaction L-aspartate + H(+) = beta-alanine + CO2. It participates in cofactor biosynthesis; (R)-pantothenate biosynthesis; beta-alanine from L-aspartate: step 1/1. Functionally, catalyzes the pyruvoyl-dependent decarboxylation of aspartate to produce beta-alanine. In Syntrophus aciditrophicus (strain SB), this protein is Aspartate 1-decarboxylase.